A 298-amino-acid polypeptide reads, in one-letter code: Ketohexokinase (298 aa).

Residues Asp-15, Gly-41, Asn-42, and Asn-45 each contribute to the beta-D-fructose site. Residues Arg-108, 226–229, and 255–258 each bind ATP; these read AEEG and GAGD. Asp-258 provides a ligand contact to beta-D-fructose.

It belongs to the carbohydrate kinase PfkB family. Homodimer.

The catalysed reaction is beta-D-fructose + ATP = beta-D-fructose 1-phosphate + ADP + H(+). It participates in carbohydrate metabolism; fructose metabolism. With respect to regulation, requires potassium. Inhibition by ADP. In terms of biological role, catalyzes the phosphorylation of the ketose sugar fructose to fructose-1-phosphate. The sequence is that of Ketohexokinase from Mus musculus (Mouse).